Here is a 288-residue protein sequence, read N- to C-terminus: Polyamine aminopropyltransferase (288 aa).

Positions 9–238 constitute a PABS domain; it reads ETLHDQFGQY…GIMTFAWATD (230 aa). Position 33 (Gln-33) interacts with S-methyl-5'-thioadenosine. His-64 and Asp-88 together coordinate spermidine. S-methyl-5'-thioadenosine contacts are provided by residues Glu-108 and 140 to 141; that span reads DG. Asp-158 serves as the catalytic Proton acceptor. Residue 158–161 participates in spermidine binding; sequence DCTD. Pro-165 serves as a coordination point for S-methyl-5'-thioadenosine.

This sequence belongs to the spermidine/spermine synthase family. Homodimer or homotetramer.

The protein localises to the cytoplasm. It carries out the reaction S-adenosyl 3-(methylsulfanyl)propylamine + putrescine = S-methyl-5'-thioadenosine + spermidine + H(+). Its pathway is amine and polyamine biosynthesis; spermidine biosynthesis; spermidine from putrescine: step 1/1. Catalyzes the irreversible transfer of a propylamine group from the amino donor S-adenosylmethioninamine (decarboxy-AdoMet) to putrescine (1,4-diaminobutane) to yield spermidine. This chain is Polyamine aminopropyltransferase, found in Shigella boydii serotype 4 (strain Sb227).